Here is a 325-residue protein sequence, read N- to C-terminus: Tetraacyldisaccharide 4'-kinase (325 aa).

Residue threonine 55–threonine 62 participates in ATP binding.

This sequence belongs to the LpxK family.

The enzyme catalyses a lipid A disaccharide + ATP = a lipid IVA + ADP + H(+). The protein operates within glycolipid biosynthesis; lipid IV(A) biosynthesis; lipid IV(A) from (3R)-3-hydroxytetradecanoyl-[acyl-carrier-protein] and UDP-N-acetyl-alpha-D-glucosamine: step 6/6. In terms of biological role, transfers the gamma-phosphate of ATP to the 4'-position of a tetraacyldisaccharide 1-phosphate intermediate (termed DS-1-P) to form tetraacyldisaccharide 1,4'-bis-phosphate (lipid IVA). The polypeptide is Tetraacyldisaccharide 4'-kinase (Salmonella dublin (strain CT_02021853)).